The primary structure comprises 1158 residues: ATP-dependent helicase/deoxyribonuclease subunit B (1158 aa).

It belongs to the helicase family. AddB/RexB type 2 subfamily. As to quaternary structure, heterodimer of AddA and RexB. It depends on Mg(2+) as a cofactor.

The heterodimer acts as both an ATP-dependent DNA helicase and an ATP-dependent, dual-direction single-stranded exonuclease. Recognizes the chi site generating a DNA molecule suitable for the initiation of homologous recombination. This subunit has 5' -&gt; 3' nuclease activity but not helicase activity. In Lactobacillus johnsonii (strain CNCM I-12250 / La1 / NCC 533), this protein is ATP-dependent helicase/deoxyribonuclease subunit B.